Reading from the N-terminus, the 435-residue chain is UPF0597 protein ASA_0240 (435 aa).

It belongs to the UPF0597 family.

The sequence is that of UPF0597 protein ASA_0240 from Aeromonas salmonicida (strain A449).